A 364-amino-acid chain; its full sequence is MSRTDDPGVAGLRVYIVGGAVRDDLLGLPAGDRDWVVVGATPEDMARRGFIPVGGDFPVFLHPRTKEEYALARTERKSGRGYKGFTFYTGADVTLEQDLQRRDLTVNAIARTPQGELVDPLDGVADVRARVLRHVGEAFAEDPVRILRLGRFAARFGDFSIAPETMQLCRRMVEAGEADALVPERVWKEVSRGLMAQAPSRMLDVLARAGALARVMPELHDDTAVRAEIDRAAAAGLPLAGRYALLCRHTPERDALGRRLRAPVECMDQARLLPLAVDALAASATPAAQLDLIERCDALRKPERFDALLQAAAIVAPVDLSAWRARVQAVRAIDAGAIARQCAGDPARIKPALRQARLQALGGA.

The ATP site is built by Gly-19 and Arg-22. The CTP site is built by Gly-19 and Arg-22. Mg(2+)-binding residues include Asp-32 and Asp-34. 3 residues coordinate ATP: Arg-102, Arg-148, and Arg-151. Residues Arg-102, Arg-148, and Arg-151 each contribute to the CTP site.

This sequence belongs to the tRNA nucleotidyltransferase/poly(A) polymerase family. Bacterial CCA-adding enzyme type 2 subfamily. The cofactor is Mg(2+).

It catalyses the reaction a tRNA precursor + 2 CTP + ATP = a tRNA with a 3' CCA end + 3 diphosphate. The enzyme catalyses a tRNA with a 3' CCA end + 2 CTP + ATP = a tRNA with a 3' CCACCA end + 3 diphosphate. Catalyzes the addition and repair of the essential 3'-terminal CCA sequence in tRNAs without using a nucleic acid template. Adds these three nucleotides in the order of C, C, and A to the tRNA nucleotide-73, using CTP and ATP as substrates and producing inorganic pyrophosphate. tRNA 3'-terminal CCA addition is required both for tRNA processing and repair. Also involved in tRNA surveillance by mediating tandem CCA addition to generate a CCACCA at the 3' terminus of unstable tRNAs. While stable tRNAs receive only 3'-terminal CCA, unstable tRNAs are marked with CCACCA and rapidly degraded. This is CCA-adding enzyme from Bordetella pertussis (strain Tohama I / ATCC BAA-589 / NCTC 13251).